The sequence spans 141 residues: Small ribosomal subunit protein bS6 (141 aa).

The interval 110–141 (SRTKVSDQPAAVEAAEAPAAPAAQEESAPASA) is disordered. Residues 117–141 (QPAAVEAAEAPAAPAAQEESAPASA) show a composition bias toward low complexity.

This sequence belongs to the bacterial ribosomal protein bS6 family.

Binds together with bS18 to 16S ribosomal RNA. The polypeptide is Small ribosomal subunit protein bS6 (Acidobacterium capsulatum (strain ATCC 51196 / DSM 11244 / BCRC 80197 / JCM 7670 / NBRC 15755 / NCIMB 13165 / 161)).